The sequence spans 370 residues: Molybdenum import ATP-binding protein ModC (370 aa).

In terms of domain architecture, ABC transporter spans 1-232 (MLDIDVLRQQ…PDIPDFAAQR (232 aa)). 30–37 (GRSGAGKT) contacts ATP. Residues 292-363 (MVSVQNILAA…IKAMSLLRDE (72 aa)) enclose the Mop domain.

The protein belongs to the ABC transporter superfamily. Molybdate importer (TC 3.A.1.8) family. In terms of assembly, the complex is composed of two ATP-binding proteins (ModC), two transmembrane proteins (ModB) and a solute-binding protein (ModA).

It is found in the cell inner membrane. The enzyme catalyses molybdate(out) + ATP + H2O = molybdate(in) + ADP + phosphate + H(+). Part of the ABC transporter complex ModABC involved in molybdenum import. Responsible for energy coupling to the transport system. The polypeptide is Molybdenum import ATP-binding protein ModC (Rhodospirillum rubrum (strain ATCC 11170 / ATH 1.1.1 / DSM 467 / LMG 4362 / NCIMB 8255 / S1)).